We begin with the raw amino-acid sequence, 395 residues long: MDPDAFTASLFKWDPRTVLSTAPSPRPQLLDYAVTPTTAPMTYHPARLPRELGGLEELFQAYGIRYYTAAKIAELGFTVSTLVDMKDDELDDMMNSLSQIFRWDLLVGERYGIKAAIRAERRRLDEEEIKRRGLLSGDTTNALDALSQEGLSEEPVVQREKEAMGSGGGSTWEVAVVEERRKRQQIRRRRMKMKGNDHGENEEGEEEEEDNISGGGVGGGERQREHPFIVTEPAEVARGKKNGLDYLFHLYEQCREFLIQVQAIAKERGEKCPTKVTNQVFRYAKKAGASYINKPKMRHYVHCYALHCLDEEVSNELRRGFKERGENVGAWRQACYKPLVAIAARQGWDIDAIFNAHPRLSIWYGPTKLRQLCHAERNGAAASSSVSFGTTHLPF.

Disordered stretches follow at residues 147–170 (SQEG…GGGS) and 185–223 (QIRR…GERQ). Positions 202–211 (EEGEEEEEDN) are enriched in acidic residues. 3 DNA-binding regions span residues 224-228 (REHPF), 293-300 (NKPKMRHY), and 364-367 (YGPT).

The protein belongs to the FLO/LFY family. Highly expressed in leaf, leaflet, inflorescence and lateral shoot primordia on the main shoot axis, and in floral organ and carpel primordia.

The protein localises to the nucleus. Its function is as follows. May regulate indeterminacy during leaf and flower development. The sequence is that of Protein UNIFOLIATA (UNI) from Pisum sativum (Garden pea).